The following is a 156-amino-acid chain: 6,7-dimethyl-8-ribityllumazine synthase (156 aa).

Residues Phe22, 57-59, and 81-83 each bind 5-amino-6-(D-ribitylamino)uracil; these read AVE and SVI. 86 to 87 is a (2S)-2-hydroxy-3-oxobutyl phosphate binding site; sequence GT. Residue His89 is the Proton donor of the active site. A 5-amino-6-(D-ribitylamino)uracil-binding site is contributed by Phe114. Arg128 is a (2S)-2-hydroxy-3-oxobutyl phosphate binding site.

This sequence belongs to the DMRL synthase family. As to quaternary structure, forms an icosahedral capsid composed of 60 subunits, arranged as a dodecamer of pentamers.

It carries out the reaction (2S)-2-hydroxy-3-oxobutyl phosphate + 5-amino-6-(D-ribitylamino)uracil = 6,7-dimethyl-8-(1-D-ribityl)lumazine + phosphate + 2 H2O + H(+). The protein operates within cofactor biosynthesis; riboflavin biosynthesis; riboflavin from 2-hydroxy-3-oxobutyl phosphate and 5-amino-6-(D-ribitylamino)uracil: step 1/2. In terms of biological role, catalyzes the formation of 6,7-dimethyl-8-ribityllumazine by condensation of 5-amino-6-(D-ribitylamino)uracil with 3,4-dihydroxy-2-butanone 4-phosphate. This is the penultimate step in the biosynthesis of riboflavin. In Aliivibrio fischeri (strain ATCC 700601 / ES114) (Vibrio fischeri), this protein is 6,7-dimethyl-8-ribityllumazine synthase.